The sequence spans 709 residues: Copper amine oxidase vicK1 (709 aa).

Positions 1–20 (MKLFLLFTLTLVNIFSVSLQ) are cleaved as a signal peptide. The active-site Proton acceptor is Asp365. A disulfide bridge links Cys383 with Cys408. Tyr448 functions as the Schiff-base intermediate with substrate; via topaquinone in the catalytic mechanism. A 2',4',5'-topaquinone modification is found at Tyr448. His496 and His498 together coordinate Cu cation. Ca(2+)-binding residues include Asp505, Leu506, Asp507, Glu548, Phe641, Glu645, Asp651, and Leu652. His662 contacts Cu cation.

It belongs to the copper/topaquinone oxidase family. As to quaternary structure, homodimer; disulfide-linked. The cofactor is Cu cation. Ca(2+) serves as cofactor. It depends on L-topaquinone as a cofactor. Post-translationally, topaquinone (TPQ) is generated by copper-dependent autoxidation of a specific tyrosyl residue.

It functions in the pathway mycotoxin biosynthesis. In terms of biological role, copper amine oxidase, part of the gene cluster that mediates the biosynthesis of the secondary metabolite victorin, the molecular basis for Victoria blight of oats. Within the pathway, vicK1 catalyzes the oxidative deamination of the N-terminal glycyl moiety of the hexapeptides in order to produce the active glyoxylate form victorins. The pathway starts with the processing of the precursor vicA1 by several endopeptidases including kexin proteases as well as the cluster-specific S28 family peptidases vicPa and vicPb to produce 7 identical copies of the hexapeptide Gly-Leu-Lys-Leu-Ala-Phe. After being excised from the precursor peptide, the core peptides are cyclized and modified post-translationally by enzymes encoded within the gene cluster. The ustYa family oxidase vicYb is required for the formation of the macrocycle in victorin and the copper amine oxidases (CAOs) vicK1 and vicK2 are responsible for converting victorin to the active form by oxidizing the N-terminal glycyl residue in the peptides to glyoxylate. Relaxed substrate specificity of enzymes in the victorin biosynthetic pathway results in a metabolic grid that produces a set of analogs including victorinines B, C, E or HV-toxin M. This chain is Copper amine oxidase vicK1, found in Bipolaris victoriae (strain FI3) (Victoria blight of oats agent).